We begin with the raw amino-acid sequence, 589 residues long: MAPESKNAGVSVVVNLDSDSDSDNDDGVGGRGAFRSMASLMDKHQVPSTTADATVAPRENLECRSFWKAGENFVIPTGVTNPAAPAIAELIDNAVDEIQNGATFVKIDKINIVKDNSPALVFQDDGGGMDPDGLRKCMSLGYSSKKSNTTIGQYGNGFKTSTMRLGADDIVFTRSTRGGKSTQSVGLLSYTFLRKTGQDDVVVPMIDIDTSKERPQPIIYGSAEDWAASLEIILKWSPFSTEGELWQQLEDIGTHGTKVIIYNLWLNDEGIYELSFHDDNEDIRLRDESVHDSKRVHHNLLELRSHISYHLRYSLRAYASMLYLKRFNNFKIILRGIPVEQFNIADELRLPETIKYNPHTTKEKAPTEIKVGFIKEAPKLAVCGFNVYHKNRLIRPFWKVTMGGERRGSGVVGVLEANFIEPAHDKQDFERSSLFQRLEARLKKIVSNYWNTHCHVFGYCTYGMPADKSKRIAIPDQPPTVNTFNPLPLPSDEIRVSQGGPIIREISLSNATSSRIAAVDTENNLVGKSAHEISEENIQLFMRCEEYVKKETELEQTVSNLAKELEETKSKCARLALLVDAKRREMQQV.

A disordered region spans residues 1-33; it reads MAPESKNAGVSVVVNLDSDSDSDNDDGVGGRGA. Residues 542 to 589 are a coiled coil; it reads MRCEEYVKKETELEQTVSNLAKELEETKSKCARLALLVDAKRREMQQV.

It belongs to the MORC ATPase protein family. In terms of assembly, homodimer and heterodimer. Component of an RNA-directed DNA methylation (RdDM) complex. Requires Mg(2+) as cofactor. Mn(2+) serves as cofactor.

It is found in the nucleus. Exhibits ATPase activity. Binds DNA/RNA in a non-specific manner and exhibits endonuclease activity. Probably involved in DNA repair. Involved in RNA-directed DNA methylation (RdDM) as a component of the RdDM machinery and required for gene silencing. May also be involved in the regulation of chromatin architecture to maintain gene silencing. In Arabidopsis thaliana (Mouse-ear cress), this protein is Protein MICRORCHIDIA 3.